We begin with the raw amino-acid sequence, 144 residues long: Monobin (144 aa).

The N-terminal stretch at 1-16 (MRLLALFAFAVAVVSA) is a signal peptide. Gln17 carries the pyrrolidone carboxylic acid modification. Residues 18–73 (RNQMCQQPRTQGSCDASNQITKFFYTGSGCTSAPVCSDTDGGYGTEDECIQACTVQ) form the BPTI/Kunitz inhibitor 1 domain. 3 cysteine pairs are disulfide-bonded: Cys22–Cys70, Cys31–Cys53, and Cys47–Cys66. The interval 74–85 (GGHHNEGAGEEG) is linker. The BPTI/Kunitz inhibitor domain maps to 86 to 139 (CSGDPPRGDCGGQVEERYYFDSTTRTCQTFEYRGCSSGNPDNSYETEIECEIAC). Intrachain disulfides connect Cys86–Cys139, Cys95–Cys120, and Cys112–Cys135. The short motif at 92-94 (RGD) is the Cell attachment site element.

The N-terminus is blocked. In terms of tissue distribution, expressed in salivary glands.

The protein resides in the cytoplasmic vesicle. It localises to the secretory vesicle. It is found in the secreted. Its function is as follows. Tick salivary thrombin inhibitor that plays an important part in the anti-hemostatic strategy of ticks. This chain is Monobin, found in Argas monolakensis (Mono lake bird tick).